A 699-amino-acid chain; its full sequence is Endogenous retrovirus group K member 19 Env polyprotein (699 aa).

Residues 1–47 form a disordered region; the sequence is MNPSEMQRKAPPRRRRHRNRAPLTHKMNKMVTSEEQMKLPSTKKAEP. The signal sequence occupies residues 1–89; it reads MNPSEMQRKA…ALMIVSMVVS (89 aa). Basic residues predominate over residues 10 to 20; sequence APPRRRRHRNR. The Extracellular segment spans residues 90–632; it reads LPMPAGAAAA…NLNPVTWVKT (543 aa). N-linked (GlcNAc...) asparagine glycosylation is found at N100, N128, N153, N274, N355, N372, and N461. The tract at residues 466–486 is fusion peptide; sequence FIFTLIAVIMGLIAVTATAAV. 4 N-linked (GlcNAc...) asparagine glycosylation sites follow: N507, N554, N566, and N585. Residues 633 to 653 traverse the membrane as a helical segment; that stretch reads IGSTTIINLILILVCLFCLLL. The Cytoplasmic segment spans residues 654-699; that stretch reads VCRCTQQLRRDSDHRERAMMTMAVLSKRKGGNVGKSKRDQIVTVSV.

This sequence belongs to the beta type-B retroviral envelope protein family. HERV class-II K(HML-2) env subfamily. As to quaternary structure, the surface (SU) and transmembrane (TM) proteins form a heterodimer. SU and TM are attached by noncovalent interactions or by a labile interchain disulfide bond. In terms of processing, specific enzymatic cleavages in vivo yield the mature SU and TM proteins.

It localises to the cell membrane. Its subcellular location is the virion. Retroviral envelope proteins mediate receptor recognition and membrane fusion during early infection. Endogenous envelope proteins may have kept, lost or modified their original function during evolution. This endogenous envelope protein has lost its original fusogenic properties. Functionally, SU mediates receptor recognition. Its function is as follows. TM anchors the envelope heterodimer to the viral membrane through one transmembrane domain. The other hydrophobic domain, called fusion peptide, mediates fusion of the viral membrane with the target cell membrane. This Homo sapiens (Human) protein is Endogenous retrovirus group K member 19 Env polyprotein (ERVK-19).